The sequence spans 313 residues: Meiotically up-regulated gene 100 protein, mitochondrial (313 aa).

2 helical membrane-spanning segments follow: residues 147-167 (VFDYLFFLYGLSGTSILYTAG) and 178-198 (SGFITPFFQLLLLVLLFTLTF).

The protein localises to the mitochondrion inner membrane. Its function is as follows. Has a role in meiosis. The polypeptide is Meiotically up-regulated gene 100 protein, mitochondrial (mug100) (Schizosaccharomyces pombe (strain 972 / ATCC 24843) (Fission yeast)).